Here is a 397-residue protein sequence, read N- to C-terminus: Multidrug resistance protein MdtH (397 aa).

11 helical membrane passes run tryptophan 11–isoleucine 31, serine 32–leucine 52, phenylalanine 71–leucine 91, alanine 94–phenylalanine 114, leucine 137–leucine 157, tyrosine 163–leucine 183, leucine 211–isoleucine 231, alanine 242–alanine 262, phenylalanine 291–isoleucine 311, leucine 340–leucine 360, and leucine 366–phenylalanine 386.

It belongs to the major facilitator superfamily. DHA1 family. MdtH (TC 2.A.1.2.21) subfamily.

Its subcellular location is the cell inner membrane. The sequence is that of Multidrug resistance protein MdtH from Aeromonas hydrophila subsp. hydrophila (strain ATCC 7966 / DSM 30187 / BCRC 13018 / CCUG 14551 / JCM 1027 / KCTC 2358 / NCIMB 9240 / NCTC 8049).